Here is a 91-residue protein sequence, read N- to C-terminus: Small ribosomal subunit protein bS18 (91 aa).

Over residues 1–14 (MTNQNQSQTQTTQT) the composition is skewed to low complexity. The disordered stretch occupies residues 1–24 (MTNQNQSQTQTTQTVEKVSSRQKK).

It belongs to the bacterial ribosomal protein bS18 family. As to quaternary structure, part of the 30S ribosomal subunit. Forms a tight heterodimer with protein bS6.

Its function is as follows. Binds as a heterodimer with protein bS6 to the central domain of the 16S rRNA, where it helps stabilize the platform of the 30S subunit. The protein is Small ribosomal subunit protein bS18 of Caldicellulosiruptor saccharolyticus (strain ATCC 43494 / DSM 8903 / Tp8T 6331).